The following is a 746-amino-acid chain: Ribosome biogenesis protein BOP1 (746 aa).

The segment at 1-116 (MAGSRGAGRT…PCPRTEMASA (116 aa)) is disordered. Positions 43–65 (SHSTGSDSGVSDSEESVFSGLED) are enriched in low complexity. Acidic residues predominate over residues 66–87 (SGSDSSEDDDEGDEEGEDGALD). Residues 88–99 (DEGHSGIKKTTE) are compositionally biased toward basic and acidic residues. At Thr-106 the chain carries Phosphothreonine. Position 122 is a phosphotyrosine (Tyr-122). A phosphoserine mark is found at Ser-126 and Ser-127. The tract at residues 265–427 (MGWIQPRRPR…CLSVSPGGQW (163 aa)) is sufficient for nucleolar localization. 7 WD repeats span residues 411–450 (GHSDLVRCLSVSPGGQWLVSGSDDGSLRLWEVATARCVRT), 452–492 (PVGG…RLVA), 532–576 (CHGK…SPFR), 577–615 (RSHGQVQRVAFHPARPFLLVASQRSVRLYHLLRQELTKK), 618–657 (PNCKWVSSLAVHPAGDNVICGSYDSKLVWFDLDLSTKPYR), 661–700 (HHKKALRAVAFHPRYPLFASGSDDGSVIVCHGMVYNDLLQ), and 716–746 (TRDLGVLDVIFHPTQPWVFSSGADGTVRLFT).

Belongs to the WD repeat BOP1/ERB1 family. In terms of assembly, component of the PeBoW complex, composed of BOP1, PES1 and WDR12. The complex is held together by BOP1, which interacts with PES1 via its N-terminal domain and with WDR12 via a high-affinity interaction between the seven-bladed beta-propeller domains of the 2 proteins. The NOP7 complex associates with the 66S pre-ribosome. The PeBoW complex associates with DDX27, BOP1 interacts directly with DDX27.

Its subcellular location is the nucleus. It is found in the nucleolus. The protein localises to the nucleoplasm. Functionally, component of the PeBoW complex, which is required for maturation of 28S and 5.8S ribosomal RNAs and formation of the 60S ribosome. This Homo sapiens (Human) protein is Ribosome biogenesis protein BOP1.